Here is a 149-residue protein sequence, read N- to C-terminus: Protein FAM72B (149 aa).

It belongs to the FAM72 family.

The polypeptide is Protein FAM72B (FAM72B) (Homo sapiens (Human)).